The sequence spans 220 residues: 7-cyano-7-deazaguanine synthase (220 aa).

7–17 (LSGGMDSSTLA) serves as a coordination point for ATP. C187, C195, C198, and C201 together coordinate Zn(2+).

This sequence belongs to the QueC family. It depends on Zn(2+) as a cofactor.

The enzyme catalyses 7-carboxy-7-deazaguanine + NH4(+) + ATP = 7-cyano-7-deazaguanine + ADP + phosphate + H2O + H(+). The protein operates within purine metabolism; 7-cyano-7-deazaguanine biosynthesis. Functionally, catalyzes the ATP-dependent conversion of 7-carboxy-7-deazaguanine (CDG) to 7-cyano-7-deazaguanine (preQ(0)). This chain is 7-cyano-7-deazaguanine synthase, found in Methanospirillum hungatei JF-1 (strain ATCC 27890 / DSM 864 / NBRC 100397 / JF-1).